The following is a 154-amino-acid chain: Crossover junction endodeoxyribonuclease RuvC (154 aa).

Catalysis depends on residues Asp7, Glu67, and Asp139. Asp7, Glu67, and Asp139 together coordinate Mg(2+).

It belongs to the RuvC family. In terms of assembly, homodimer which binds Holliday junction (HJ) DNA. The HJ becomes 2-fold symmetrical on binding to RuvC with unstacked arms; it has a different conformation from HJ DNA in complex with RuvA. In the full resolvosome a probable DNA-RuvA(4)-RuvB(12)-RuvC(2) complex forms which resolves the HJ. The cofactor is Mg(2+).

Its subcellular location is the cytoplasm. The enzyme catalyses Endonucleolytic cleavage at a junction such as a reciprocal single-stranded crossover between two homologous DNA duplexes (Holliday junction).. In terms of biological role, the RuvA-RuvB-RuvC complex processes Holliday junction (HJ) DNA during genetic recombination and DNA repair. Endonuclease that resolves HJ intermediates. Cleaves cruciform DNA by making single-stranded nicks across the HJ at symmetrical positions within the homologous arms, yielding a 5'-phosphate and a 3'-hydroxyl group; requires a central core of homology in the junction. The consensus cleavage sequence is 5'-(A/T)TT(C/G)-3'. Cleavage occurs on the 3'-side of the TT dinucleotide at the point of strand exchange. HJ branch migration catalyzed by RuvA-RuvB allows RuvC to scan DNA until it finds its consensus sequence, where it cleaves and resolves the cruciform DNA. The polypeptide is Crossover junction endodeoxyribonuclease RuvC (Parasynechococcus marenigrum (strain WH8102)).